The chain runs to 513 residues: OBERON-like protein (513 aa).

The PHD-type zinc finger occupies 166 to 235 (NGFCNLCMCV…VFRCQACSXT (70 aa)). Residues 372 to 469 (RELADKAREA…LYEKIKLQES (98 aa)) are a coiled coil. The interval 493–513 (YNGPPKADSQSNDCHPFRTNP) is disordered. The segment covering 500-513 (DSQSNDCHPFRTNP) has biased composition (polar residues).

As to quaternary structure, self-interacts and probably forms heteromers. Binds to VPg of pea seed borne mosaic virus (PSbMV), turnip mosaic virus (TuMV) and lettuce mosaic virus (LMV), but not with VPg of tobacco etch virus (TEV), cowpea mosaic virus (CPMV), tomato black ring virus (TBRV) and grapevine fan leaf virus (GFLV).

It is found in the nucleus. Functionally, required for the maintenance and/or establishment of both the shoot and root meristems, probably by controlling the expression of the meristem genes and of genes required for auxin responses. Involved in the development of the basal pole and in auxin-mediated root and vascular development in the embryo. Confers sensitivity to turnip mosaic virus (TuMV) probably by promoting viral movement and multiplication via interaction with TuMV VPg. In Pisum sativum (Garden pea), this protein is OBERON-like protein (PVIP).